Consider the following 338-residue polypeptide: Nicotinate-nucleotide--dimethylbenzimidazole phosphoribosyltransferase (338 aa).

The Proton acceptor role is filled by Glu305.

The protein belongs to the CobT family.

It carries out the reaction 5,6-dimethylbenzimidazole + nicotinate beta-D-ribonucleotide = alpha-ribazole 5'-phosphate + nicotinate + H(+). It participates in nucleoside biosynthesis; alpha-ribazole biosynthesis; alpha-ribazole from 5,6-dimethylbenzimidazole: step 1/2. In terms of biological role, catalyzes the synthesis of alpha-ribazole-5'-phosphate from nicotinate mononucleotide (NAMN) and 5,6-dimethylbenzimidazole (DMB). The chain is Nicotinate-nucleotide--dimethylbenzimidazole phosphoribosyltransferase from Rhizobium meliloti (strain 1021) (Ensifer meliloti).